The sequence spans 564 residues: Protein CPR-5 (564 aa).

Residues 1-87 (MEALLLPPSP…TSNSNSTKRV (87 aa)) form a disordered region. Polar residues predominate over residues 12 to 28 (PQNQITNPANSKPNHQS). A compositionally biased stretch (basic and acidic residues) spans 29–38 (GDVHKDETMM). Low complexity predominate over residues 69–84 (SSSYCSTSSTSNSNST). 5 consecutive transmembrane segments (helical) span residues 347 to 367 (IMDWLLVSVFSMLASMVLGVY), 411 to 431 (VRVWVQIFFGVLMIIVFTYFL), 443 to 463 (PISFIVLFLGIFCGVSGKLCV), 472 to 492 (LWLIVWEVFCLLQFVANVFTL), and 526 to 546 (VYVVILFVLPVINGLLPFATF).

As to quaternary structure, interacts with SIM and SMR1. Ubiquitous.

The protein resides in the membrane. It is found in the nucleus membrane. Its function is as follows. May play a role in transcriptional processes. Negatively regulates the senescence and chlorotic lesions induced by biotic (e.g. pathogens) and abiotic (e.g. sugars, darkness) agents, probably by controlling programmed cell death (pcd). Negative regulator of plant programmed cell death (PCD) and effector-triggered immunity (ETI). Promotes cell division and endoreduplication (e.g. in trichomes). The polypeptide is Protein CPR-5 (Arabidopsis thaliana (Mouse-ear cress)).